Reading from the N-terminus, the 102-residue chain is Small ribosomal subunit protein bS6 (102 aa).

It belongs to the bacterial ribosomal protein bS6 family.

In terms of biological role, binds together with bS18 to 16S ribosomal RNA. This is Small ribosomal subunit protein bS6 (rpsF) from Deinococcus radiodurans (strain ATCC 13939 / DSM 20539 / JCM 16871 / CCUG 27074 / LMG 4051 / NBRC 15346 / NCIMB 9279 / VKM B-1422 / R1).